Here is a 1530-residue protein sequence, read N- to C-terminus: Synaptonemal complex protein 2 (1530 aa).

Basic and acidic residues predominate over residues 439–461 (EKSKSPKEFAKPSKYIKNSDKGN). A disordered region spans residues 439–480 (EKSKSPKEFAKPSKYIKNSDKGNRNNSQLEKTTPSKRKMSEA). 2 positions are modified to phosphoserine: S457 and S465. Phosphothreonine is present on T471. 4 positions are modified to phosphoserine: S494, S519, S529, and S538. Residues 496–555 (VLFSNTSIPPRRRRIKPPLQMTSSAEKPSVSQTSENRVDNAASLKSRSSEGRHRRDNIDK) form a disordered region. A compositionally biased stretch (polar residues) spans 515-530 (QMTSSAEKPSVSQTSE). The span at 542–555 (RSSEGRHRRDNIDK) shows a compositional bias: basic and acidic residues. T619 bears the Phosphothreonine mark. 3 disordered regions span residues 653–676 (QKSSSSISDHNSEGTGKVKYKKEQ), 693–717 (HNQQQNHPKYSGQKNTENAKQSDWP), and 755–795 (DKNP…SKGK). Phosphoserine occurs at positions 660 and 664. Polar residues-rich tracts occupy residues 695-713 (QQQNHPKYSGQKNTENAKQ) and 755-764 (DKNPSASKNV). S936 is subject to Phosphoserine. At T938 the chain carries Phosphothreonine. The segment at 962–1003 (QLIDYSRNKNVKNHKSGKSRSSLEKGQPSSKMTPSKNITKKM) is disordered. A compositionally biased stretch (basic residues) spans 970–979 (KNVKNHKSGK). Over residues 988–998 (QPSSKMTPSKN) the composition is skewed to polar residues. 5 positions are modified to phosphoserine: S1136, S1138, S1145, S1161, and S1177. T1189 is modified (phosphothreonine). Phosphoserine is present on residues S1204, S1234, S1253, S1295, and S1297. The residue at position 1339 (T1339) is a Phosphothreonine.

Belongs to the SYCP2 family. Component of the lateral elements of synaptonemal complexes. Heterodimer with SYCP3. Interacts with SMC1A and SMC3. Interacts with TEX11. Post-translationally, phosphorylated.

It localises to the nucleus. Its subcellular location is the chromosome. Major component of the axial/lateral elements of synaptonemal complexes (SCS) during meiotic prophase. Plays a role in the assembly of synaptonemal complexes. Required for normal meiotic chromosome synapsis during oocyte and spermatocyte development and for normal male and female fertility. Required for insertion of SYCP3 into synaptonemal complexes. May be involved in the organization of chromatin by temporarily binding to DNA scaffold attachment regions. Requires SYCP3, but not SYCP1, in order to be incorporated into the axial/lateral elements. This chain is Synaptonemal complex protein 2 (SYCP2), found in Homo sapiens (Human).